Reading from the N-terminus, the 158-residue chain is Ribosome maturation factor RimP (158 aa).

Belongs to the RimP family.

It is found in the cytoplasm. In terms of biological role, required for maturation of 30S ribosomal subunits. This chain is Ribosome maturation factor RimP, found in Lactobacillus delbrueckii subsp. bulgaricus (strain ATCC 11842 / DSM 20081 / BCRC 10696 / JCM 1002 / NBRC 13953 / NCIMB 11778 / NCTC 12712 / WDCM 00102 / Lb 14).